A 367-amino-acid chain; its full sequence is GTPase Obg (367 aa).

The 158-residue stretch at 1-158 (MFIDNVELTV…VQIRLELKLI (158 aa)) folds into the Obg domain. The 200-residue stretch at 159–358 (ADVGLVGFPN…LKYALYDLVK (200 aa)) folds into the OBG-type G domain. GTP contacts are provided by residues 165–172 (GFPNVGKS), 190–194 (FTTLT), 212–215 (DIPG), 280–283 (TKID), and 339–341 (SAV). Serine 172 and threonine 192 together coordinate Mg(2+).

This sequence belongs to the TRAFAC class OBG-HflX-like GTPase superfamily. OBG GTPase family. In terms of assembly, monomer. Mg(2+) is required as a cofactor.

The protein resides in the cytoplasm. Its function is as follows. An essential GTPase which binds GTP, GDP and possibly (p)ppGpp with moderate affinity, with high nucleotide exchange rates and a fairly low GTP hydrolysis rate. Plays a role in control of the cell cycle, stress response, ribosome biogenesis and in those bacteria that undergo differentiation, in morphogenesis control. The sequence is that of GTPase Obg from Nitratiruptor sp. (strain SB155-2).